Consider the following 208-residue polypeptide: Small ribosomal subunit protein uS4 (208 aa).

The 64-residue stretch at 98–161 (RRLDNVIYRM…KELEIIKESL (64 aa)) folds into the S4 RNA-binding domain.

It belongs to the universal ribosomal protein uS4 family. In terms of assembly, part of the 30S ribosomal subunit. Contacts protein S5. The interaction surface between S4 and S5 is involved in control of translational fidelity.

One of the primary rRNA binding proteins, it binds directly to 16S rRNA where it nucleates assembly of the body of the 30S subunit. Its function is as follows. With S5 and S12 plays an important role in translational accuracy. This Thermodesulfovibrio yellowstonii (strain ATCC 51303 / DSM 11347 / YP87) protein is Small ribosomal subunit protein uS4.